The primary structure comprises 525 residues: MSNVERALISVSDKTGIVEFAQALADKGVELLSTGGTFKKLQEAGIAVREVSDYTGFPEMMAGRVKTLHPKVHGGILGRRGQDEQVMADNDISPIDLVVVNLYPFEATVANPDCSLEDAIENIDIGGPTMVRSAAKNNASVGIVTDAADYQRVLDDMAANNGALSDDLRFDLAIKAFEHTAAYDSAIANYFGKKVEGQDGMSNLDFPRTINLNFEKTQNMRYGENPHQKAAFYTERNPAPASIATAKQLQGKELSYNNIADTDAALECVKGFTKPACVIVKHANPCGVAVSLDGITTAYDLAFATDTESAFGGIIAFNRKLDAATAQAIVDRQFVEVIIAPSATEEALAITAAKKNVRVLVCGEMEGVAASGLDYKRVNGGLLVQDRDLGMITEGELKVVTKRAPTEAEMHDLIFAWKVAKFVKSNAIVYAKDRQTVGVGAGQMSRVNSARIAAIKAEHAGLQVKGSVMASDAFFPFRDGIDNAAKVGISCVIQPGGSIRDEEVIAAADEAGMAMVFTGMRHFRH.

An MGS-like domain is found at 1–145 (MSNVERALIS…KNNASVGIVT (145 aa)).

This sequence belongs to the PurH family.

The catalysed reaction is (6R)-10-formyltetrahydrofolate + 5-amino-1-(5-phospho-beta-D-ribosyl)imidazole-4-carboxamide = 5-formamido-1-(5-phospho-D-ribosyl)imidazole-4-carboxamide + (6S)-5,6,7,8-tetrahydrofolate. It catalyses the reaction IMP + H2O = 5-formamido-1-(5-phospho-D-ribosyl)imidazole-4-carboxamide. Its pathway is purine metabolism; IMP biosynthesis via de novo pathway; 5-formamido-1-(5-phospho-D-ribosyl)imidazole-4-carboxamide from 5-amino-1-(5-phospho-D-ribosyl)imidazole-4-carboxamide (10-formyl THF route): step 1/1. It functions in the pathway purine metabolism; IMP biosynthesis via de novo pathway; IMP from 5-formamido-1-(5-phospho-D-ribosyl)imidazole-4-carboxamide: step 1/1. The polypeptide is Bifunctional purine biosynthesis protein PurH (Alcanivorax borkumensis (strain ATCC 700651 / DSM 11573 / NCIMB 13689 / SK2)).